The primary structure comprises 350 residues: MAEKVNVCIVGSGNWGSAIAKIVGANASALPEFEERVTMFVYEEMIDGKKLTEIINETHENVKYLKGHKLPTNVVAVPDLVEAAKNADILIFVVPHQFIPNFCKQLLGKIKPNAIAISLIKGFDKAEGGGIDLISHIITRHLKIPCAVLMGANLANEVAEGNFCETTIGCTDKKYGKVLRDLFQANHFRVVVVEDADAVEVCGALKNIVACGAGFVDGLKLGDNTKAAVIRLGLMEMIRFVDVFYPGSKLSTFFESCGVADLITTCYGGRNRRVSEAFVTSGKTIEELEKEMLNGQKLQGPPTAEEVNYMLKNKGLEDKFPLFTAIHKICTNQLKPKDLIDCIRNHPEHM.

NAD(+) is bound by residues 11–16 (GSGNWG), Phe-98, Lys-121, and Ala-155. Lys-121 lines the substrate pocket. Catalysis depends on Lys-206, which acts as the Proton acceptor. Residues Arg-270 and Gln-299 each coordinate NAD(+). 270-271 (RN) provides a ligand contact to substrate.

It belongs to the NAD-dependent glycerol-3-phosphate dehydrogenase family. As to quaternary structure, homodimer.

It is found in the cytoplasm. It carries out the reaction sn-glycerol 3-phosphate + NAD(+) = dihydroxyacetone phosphate + NADH + H(+). It participates in phospholipid metabolism; alpha-glycerophosphate cycle. The polypeptide is Glycerol-3-phosphate dehydrogenase [NAD(+)], cytoplasmic (Gpdh1) (Drosophila ezoana (Fruit fly)).